A 192-amino-acid chain; its full sequence is Phosphoheptose isomerase (192 aa).

Residues Leu-35–Asn-192 form the SIS domain. Asn-50–Gly-52 lines the substrate pocket. His-59 and Glu-63 together coordinate Zn(2+). Residues Glu-63, Asn-92–Asp-93, Ser-118–Ser-120, Ser-123, and Gln-170 contribute to the substrate site. Residues Gln-170 and His-178 each coordinate Zn(2+).

The protein belongs to the SIS family. GmhA subfamily. In terms of assembly, homotetramer. The cofactor is Zn(2+).

The protein localises to the cytoplasm. The enzyme catalyses 2 D-sedoheptulose 7-phosphate = D-glycero-alpha-D-manno-heptose 7-phosphate + D-glycero-beta-D-manno-heptose 7-phosphate. Its pathway is carbohydrate biosynthesis; D-glycero-D-manno-heptose 7-phosphate biosynthesis; D-glycero-alpha-D-manno-heptose 7-phosphate and D-glycero-beta-D-manno-heptose 7-phosphate from sedoheptulose 7-phosphate: step 1/1. Its function is as follows. Catalyzes the isomerization of sedoheptulose 7-phosphate in D-glycero-D-manno-heptose 7-phosphate. This Helicobacter pylori (strain P12) protein is Phosphoheptose isomerase.